Reading from the N-terminus, the 310-residue chain is Aspartate carbamoyltransferase catalytic subunit (310 aa).

Arginine 59 and threonine 60 together coordinate carbamoyl phosphate. An L-aspartate-binding site is contributed by lysine 87. Residues arginine 109, histidine 139, and glutamine 142 each contribute to the carbamoyl phosphate site. L-aspartate-binding residues include arginine 172 and arginine 224. Residues alanine 265 and proline 266 each coordinate carbamoyl phosphate.

Belongs to the aspartate/ornithine carbamoyltransferase superfamily. ATCase family. In terms of assembly, heterododecamer (2C3:3R2) of six catalytic PyrB chains organized as two trimers (C3), and six regulatory PyrI chains organized as three dimers (R2).

The catalysed reaction is carbamoyl phosphate + L-aspartate = N-carbamoyl-L-aspartate + phosphate + H(+). Its pathway is pyrimidine metabolism; UMP biosynthesis via de novo pathway; (S)-dihydroorotate from bicarbonate: step 2/3. In terms of biological role, catalyzes the condensation of carbamoyl phosphate and aspartate to form carbamoyl aspartate and inorganic phosphate, the committed step in the de novo pyrimidine nucleotide biosynthesis pathway. In Lactococcus lactis subsp. cremoris (strain MG1363), this protein is Aspartate carbamoyltransferase catalytic subunit.